A 232-amino-acid polypeptide reads, in one-letter code: Enolase-phosphatase E1 (232 aa).

It belongs to the HAD-like hydrolase superfamily. MasA/MtnC family. Monomer. The cofactor is Mg(2+).

It catalyses the reaction 5-methylsulfanyl-2,3-dioxopentyl phosphate + H2O = 1,2-dihydroxy-5-(methylsulfanyl)pent-1-en-3-one + phosphate. It functions in the pathway amino-acid biosynthesis; L-methionine biosynthesis via salvage pathway; L-methionine from S-methyl-5-thio-alpha-D-ribose 1-phosphate: step 3/6. Its pathway is amino-acid biosynthesis; L-methionine biosynthesis via salvage pathway; L-methionine from S-methyl-5-thio-alpha-D-ribose 1-phosphate: step 4/6. Bifunctional enzyme that catalyzes the enolization of 2,3-diketo-5-methylthiopentyl-1-phosphate (DK-MTP-1-P) into the intermediate 2-hydroxy-3-keto-5-methylthiopentenyl-1-phosphate (HK-MTPenyl-1-P), which is then dephosphorylated to form the acireductone 1,2-dihydroxy-3-keto-5-methylthiopentene (DHK-MTPene). In Nocardia farcinica (strain IFM 10152), this protein is Enolase-phosphatase E1.